The chain runs to 201 residues: Elongation factor Ts (201 aa).

Positions Thr81–Val84 are involved in Mg(2+) ion dislocation from EF-Tu.

The protein belongs to the EF-Ts family.

Its subcellular location is the cytoplasm. In terms of biological role, associates with the EF-Tu.GDP complex and induces the exchange of GDP to GTP. It remains bound to the aminoacyl-tRNA.EF-Tu.GTP complex up to the GTP hydrolysis stage on the ribosome. The chain is Elongation factor Ts from Syntrophus aciditrophicus (strain SB).